Here is a 118-residue protein sequence, read N- to C-terminus: MSCQQNQQQCQPPPKCIPKCPPKCLTPRCPPKCPPKCPPVSSCCSVSSGGCCGSSSGGSCGSSSGGCCSSGGGGCCLSHHRRRRSHCHRPQSSGCCSQPSGGSSCCGGGSGQHSGGCC.

Residues 87 to 118 (CHRPQSSGCCSQPSGGSSCCGGGSGQHSGGCC) form a disordered region. Residues 90–103 (PQSSGCCSQPSGGS) show a composition bias toward low complexity. The span at 104–118 (SCCGGGSGQHSGGCC) shows a compositional bias: gly residues.

It belongs to the LCE family. As to quaternary structure, interacts with CYSRT1; the interaction is direct. As to expression, skin-specific. Expression was readily detected in adult trunk skin, adult arm skin, fetal skin, penal skin, vulva, esophagus and tongue. Not expressed in the cervix, rectum, lung, colon, or placenta.

In terms of biological role, precursors of the cornified envelope of the stratum corneum. This is Late cornified envelope protein 1B (LCE1B) from Homo sapiens (Human).